Reading from the N-terminus, the 366-residue chain is Flagellar P-ring protein (366 aa).

The N-terminal stretch at 1–20 is a signal peptide; sequence MVIKFLSALILLLVTTAVQA.

Belongs to the FlgI family. In terms of assembly, the basal body constitutes a major portion of the flagellar organelle and consists of four rings (L,P,S, and M) mounted on a central rod.

It localises to the periplasm. Its subcellular location is the bacterial flagellum basal body. In terms of biological role, assembles around the rod to form the L-ring and probably protects the motor/basal body from shearing forces during rotation. The polypeptide is Flagellar P-ring protein (Escherichia coli O6:H1 (strain CFT073 / ATCC 700928 / UPEC)).